Consider the following 503-residue polypeptide: Lanosterol 14-alpha demethylase (503 aa).

A helical transmembrane segment spans residues 24 to 44; sequence GNLLSTLLIACAFTLSLVYLF. Heme is bound at residue cysteine 449.

Belongs to the cytochrome P450 family. Requires heme as cofactor. Ubiquitinated by MARCHF6, leading to proteasomal degradation.

The protein localises to the endoplasmic reticulum membrane. It localises to the microsome membrane. It carries out the reaction a 14alpha-methyl steroid + 3 reduced [NADPH--hemoprotein reductase] + 3 O2 = a Delta(14) steroid + formate + 3 oxidized [NADPH--hemoprotein reductase] + 4 H2O + 4 H(+). It catalyses the reaction lanosterol + 3 reduced [NADPH--hemoprotein reductase] + 3 O2 = 4,4-dimethyl-5alpha-cholesta-8,14,24-trien-3beta-ol + formate + 3 oxidized [NADPH--hemoprotein reductase] + 4 H2O + 4 H(+). The enzyme catalyses 24,25-dihydrolanosterol + 3 reduced [NADPH--hemoprotein reductase] + 3 O2 = 4,4-dimethyl-8,14-cholestadien-3beta-ol + formate + 3 oxidized [NADPH--hemoprotein reductase] + 4 H2O + 4 H(+). The catalysed reaction is a 14alpha-methyl steroid + reduced [NADPH--hemoprotein reductase] + O2 = a 14alpha-hydroxymethyl steroid + oxidized [NADPH--hemoprotein reductase] + H2O + H(+). It carries out the reaction a 14alpha-hydroxymethyl steroid + reduced [NADPH--hemoprotein reductase] + O2 = a 14alpha-formyl steroid + oxidized [NADPH--hemoprotein reductase] + 2 H2O + H(+). It catalyses the reaction a 14alpha-formyl steroid + reduced [NADPH--hemoprotein reductase] + O2 = a Delta(14) steroid + formate + oxidized [NADPH--hemoprotein reductase] + H2O + 2 H(+). The enzyme catalyses lanosterol + reduced [NADPH--hemoprotein reductase] + O2 = 32-hydroxylanosterol + oxidized [NADPH--hemoprotein reductase] + H2O + H(+). The catalysed reaction is 32-hydroxylanosterol + reduced [NADPH--hemoprotein reductase] + O2 = 32-oxolanosterol + oxidized [NADPH--hemoprotein reductase] + 2 H2O + H(+). It carries out the reaction 32-oxolanosterol + reduced [NADPH--hemoprotein reductase] + O2 = 4,4-dimethyl-5alpha-cholesta-8,14,24-trien-3beta-ol + formate + oxidized [NADPH--hemoprotein reductase] + H2O + 2 H(+). It catalyses the reaction 24,25-dihydrolanosterol + reduced [NADPH--hemoprotein reductase] + O2 = 32-hydroxy-24,25-dihydrolanosterol + oxidized [NADPH--hemoprotein reductase] + H2O + H(+). The enzyme catalyses 32-hydroxy-24,25-dihydrolanosterol + reduced [NADPH--hemoprotein reductase] + O2 = 32-oxo-24,25-dihydrolanosterol + oxidized [NADPH--hemoprotein reductase] + 2 H2O + H(+). The catalysed reaction is 32-oxo-24,25-dihydrolanosterol + reduced [NADPH--hemoprotein reductase] + O2 = 4,4-dimethyl-8,14-cholestadien-3beta-ol + formate + oxidized [NADPH--hemoprotein reductase] + H2O + 2 H(+). The protein operates within steroid biosynthesis; zymosterol biosynthesis; zymosterol from lanosterol: step 1/6. With respect to regulation, inhibited by azalanstat. Inhibited by azole antifungal agents ketoconazole, itraconazole and fluconazole. Its function is as follows. Sterol 14alpha-demethylase that plays a critical role in the cholesterol biosynthesis pathway, being cholesterol the major sterol component in mammalian membranes as well as a precursor for bile acid and steroid hormone synthesis. Cytochrome P450 monooxygenase that catalyzes the three-step oxidative removal of the 14alpha-methyl group (C-32) of sterols such as lanosterol (lanosta-8,24-dien-3beta-ol) and 24,25-dihydrolanosterol (DHL) in the form of formate, and converts the sterols to 4,4-dimethyl-5alpha-cholesta-8,14,24-trien-3beta-ol and 4,4-dimethyl-8,14-cholestadien-3beta-ol, respectively, which are intermediates of cholesterol biosynthesis. Can also demethylate substrates not intrinsic to mammals, such as eburicol (24-methylene-24,25-dihydrolanosterol), but at a lower rate than DHL. This chain is Lanosterol 14-alpha demethylase, found in Mus musculus (Mouse).